Consider the following 345-residue polypeptide: Nicotinate-nucleotide--dimethylbenzimidazole phosphoribosyltransferase (345 aa).

The active-site Proton acceptor is E312.

Belongs to the CobT family.

It catalyses the reaction 5,6-dimethylbenzimidazole + nicotinate beta-D-ribonucleotide = alpha-ribazole 5'-phosphate + nicotinate + H(+). It functions in the pathway nucleoside biosynthesis; alpha-ribazole biosynthesis; alpha-ribazole from 5,6-dimethylbenzimidazole: step 1/2. Functionally, catalyzes the synthesis of alpha-ribazole-5'-phosphate from nicotinate mononucleotide (NAMN) and 5,6-dimethylbenzimidazole (DMB). In Bacteroides fragilis (strain ATCC 25285 / DSM 2151 / CCUG 4856 / JCM 11019 / LMG 10263 / NCTC 9343 / Onslow / VPI 2553 / EN-2), this protein is Nicotinate-nucleotide--dimethylbenzimidazole phosphoribosyltransferase.